The following is a 628-amino-acid chain: FAD-linked oxidoreductase easE (628 aa).

A signal peptide spans 1 to 20 (MSHRILCVAFCVCSLVAVSS). Residues 144 to 328 (HQGRIPLYSA…TRATMRVHLN (185 aa)) enclose the FAD-binding PCMH-type domain. H182 is modified (pros-8alpha-FAD histidine). N343, N382, and N487 each carry an N-linked (GlcNAc...) asparagine glycan.

It belongs to the oxygen-dependent FAD-linked oxidoreductase family. Requires FAD as cofactor.

The protein operates within alkaloid biosynthesis; ergot alkaloid biosynthesis. Its function is as follows. FAD binding oxidoreductase; part of the gene cluster that mediates the biosynthesis of fumiclavanine C, a fungal ergot alkaloid. DmaW catalyzes the first step of ergot alkaloid biosynthesis by condensing dimethylallyl diphosphate (DMAP) and tryptophan to form 4-dimethylallyl-L-tryptophan. The second step is catalyzed by the methyltransferase easF that methylates 4-dimethylallyl-L-tryptophan in the presence of S-adenosyl-L-methionine, resulting in the formation of 4-dimethylallyl-L-abrine. The catalase easC and the FAD-dependent oxidoreductase easE then transform 4-dimethylallyl-L-abrine to chanoclavine-I which is further oxidized by EasD in the presence of NAD(+), resulting in the formation of chanoclavine-I aldehyde. EasA reduces chanoclavine-I aldehyde to dihydrochanoclavine-I aldehyde that spontaneously dehydrates to form 6,8-dimethyl-6,7-didehydroergoline. EasG then catalyzes the reduction of 6,8-dimethyl-6,7-didehydroergoline to form festuclavine. Hydrolysis of festuclavine by easM then leads to the formation of fumigaclavine B which is in turn acetylated by easN to fumigaclavine A. Finally, easL catalyzes the conversion of fumigaclavine A into fumigaclavine C by attaching a dimethylallyl moiety to C-2 of the indole nucleus. This is FAD-linked oxidoreductase easE from Aspergillus fumigatus (strain ATCC MYA-4609 / CBS 101355 / FGSC A1100 / Af293) (Neosartorya fumigata).